Consider the following 58-residue polypeptide: Putative antitoxin VapB16 (58 aa).

Putative antitoxin component of a possible type II toxin-antitoxin (TA) system. The cognate toxin is VapC16. This is Putative antitoxin VapB16 (vapB16) from Mycobacterium tuberculosis (strain ATCC 25618 / H37Rv).